The chain runs to 249 residues: U2 small nuclear ribonucleoprotein A' (249 aa).

LRR repeat units lie at residues 20–41 (KERE…GATE), 43–64 (QFDT…PYLN), 65–87 (RLGT…GEFL), and 89–110 (KLHS…DPLA). Residues 123–161 (NNITKKANYRLYVIHKLKSLRVLDFIKIKAKERAEAASL) form the LRRCT domain.

Belongs to the U2 small nuclear ribonucleoprotein A family.

The protein resides in the nucleus. Its subcellular location is the nucleus speckle. Functionally, this protein is associated with sn-RNP U2. It helps the A' protein to bind stem loop IV of U2 snRNA. This is U2 small nuclear ribonucleoprotein A' from Arabidopsis thaliana (Mouse-ear cress).